Here is a 443-residue protein sequence, read N- to C-terminus: Mitochondrial enolase superfamily member 1 (443 aa).

Residues 24–26 and Y34 each bind substrate; that span reads GAD. The residue at position 148 (S148) is a Phosphoserine. K220 contributes to the substrate binding site. The active-site Proton donor/acceptor is K222. D250 is a binding site for Mg(2+). Substrate contacts are provided by residues N252, E276, E305, 355–357, and E386; that span reads HAG. Mg(2+)-binding residues include E276 and E305. H355 is a catalytic residue.

This sequence belongs to the mandelate racemase/muconate lactonizing enzyme family. ENOSF1 subfamily. Mg(2+) is required as a cofactor. Could be sumoylated.

Its subcellular location is the mitochondrion. The catalysed reaction is L-fuconate = 2-dehydro-3-deoxy-L-fuconate + H2O. Plays a role in the catabolism of L-fucose, a sugar that is part of the carbohydrates that are attached to cellular glycoproteins. Catalyzes the dehydration of L-fuconate to 2-keto-3-deoxy-L-fuconate by the abstraction of the 2-proton to generate an enediolate intermediate that is stabilized by the magnesium ion. The chain is Mitochondrial enolase superfamily member 1 (ENOSF1) from Homo sapiens (Human).